A 1554-amino-acid chain; its full sequence is Myosin-2 (1554 aa).

Residues 4–57 (EVGTRCWYPDKQQGWIGGEITKHTNLSNKHQLELTLEDNQIVEIESETLDETKD) form the Myosin N-terminal SH3-like domain. Positions 70–774 (EATEDLTSLS…MLAYLEKLRS (705 aa)) constitute a Myosin motor domain. ATP is bound at residue 164–171 (GESGAGKT). Positions 443–523 (FIGVLDIYGF…LGILSLLDEE (81 aa)) are actin-binding. IQ domains are found at residues 778 to 798 (HNSSVLIQKKVKAVYYRKKYL), 800 to 824 (IISSIRNFHSRSEGFLTRQRVDLEF), 825 to 847 (KTQAAILIQSMVRSTSTRNKTIS), 848 to 872 (LLSAITRLQSLVRKQLAQKELLQRR), 873 to 895 (QRDAAVSIQKKIRAFEPRQSFNT), and 896 to 925 (TRRSTVVVQSLVRKKFAQKKLKDLKTEAKS). A coiled-coil region spans residues 926-1079 (VNHLKEVSYK…IARLQAAVRS (154 aa)). A non alpha-helical, tail domain region spans residues 1080–1554 (GVTSSTITST…VTVQESQRTE (475 aa)). The segment covering 1082–1093 (TSSTITSTPTAS) has biased composition (low complexity). The tract at residues 1082–1109 (TSSTITSTPTASRRFSAHSSVADGTSPR) is disordered. Positions 1098–1109 (AHSSVADGTSPR) are enriched in polar residues. Positions 1205 to 1480 (AEVLSTIQKL…LNFVADRVKK (276 aa)) constitute a Dilute domain.

The protein belongs to the TRAFAC class myosin-kinesin ATPase superfamily. Myosin family. Homodimer. Interacts with calmodulin (CMD1) and the myosin light chain MLC1 through its IQ repeats.

Its function is as follows. Myosin heavy chain that is required for the cell cycle-regulated transport of various organelles and proteins for their segregation. Functions by binding with its tail domain to receptor proteins on organelles and exerting force with its N-terminal motor domain against actin filaments, thereby transporting its cargo along polarized actin cables. The protein is Myosin-2 (MYO2) of Lachancea kluyveri (strain ATCC 58438 / CBS 3082 / BCRC 21498 / NBRC 1685 / JCM 7257 / NCYC 543 / NRRL Y-12651) (Yeast).